The primary structure comprises 207 residues: LexA repressor (207 aa).

Residues 28–48 (RAEIARRLGFKSPNAAEEHLK) constitute a DNA-binding region (H-T-H motif). Active-site for autocatalytic cleavage activity residues include Ser-126 and Lys-163.

This sequence belongs to the peptidase S24 family. In terms of assembly, homodimer.

It catalyses the reaction Hydrolysis of Ala-|-Gly bond in repressor LexA.. Its function is as follows. Represses a number of genes involved in the response to DNA damage (SOS response), including recA and lexA. In the presence of single-stranded DNA, RecA interacts with LexA causing an autocatalytic cleavage which disrupts the DNA-binding part of LexA, leading to derepression of the SOS regulon and eventually DNA repair. The chain is LexA repressor from Marinomonas sp. (strain MWYL1).